Here is a 22-residue protein sequence, read N- to C-terminus: Plasticin-TR (22 aa).

The protein belongs to the frog skin active peptide (FSAP) family. Plasticin subfamily. Exhibits a propensity to self-association and forms helical oligomers in membrane-mimetic environments. Expressed by the skin glands.

Its subcellular location is the secreted. The protein resides in the target cell membrane. Its function is as follows. Has no antimicrobial activity against Gram-negative bacterium E.coli ATCC 25922, Gram-positive bacterium S.epidermidis ATCC 12228 and against fungus C.albicans ATCC 24433 at concentrations up to 100 uM. Has an anti-inflammatory effect, since it inhibits the production of the pro-inflammatory cytokines TNF-alpha and IL-1 beta. Has high activity of stimulation of insulin release, which may protect the species from being eaten by predators by causing fatal hypoglycemia. Is not cytotoxic to cancer line cells. Does not show hemolysis on mouse erythrocytes. Adopts a mixture of alpha-helical and beta-sheet structures. This chain is Plasticin-TR, found in Phyllomedusa trinitatis (Trinidad leaf frog).